A 207-amino-acid chain; its full sequence is Protein FMP32, mitochondrial (207 aa).

The stretch at A100–G136 forms a coiled coil. Residues V184–L206 form a helical membrane-spanning segment.

The protein belongs to the CCDC90 family.

It localises to the mitochondrion. Its subcellular location is the membrane. In Saccharomyces cerevisiae (strain ATCC 204508 / S288c) (Baker's yeast), this protein is Protein FMP32, mitochondrial (FMP32).